A 217-amino-acid chain; its full sequence is MAEVKLLGLRYSPFSHRVEWALKIKGVKYEFIEEDLQNKSPLLLQSNPIHKKIPVLIHNGKCICESMVILEYIDEAFEGPSILPKDPYDRALARFWAKYVEDKGAAVWKSFFSKGEEQEKAKEEAYEMLKILDNEFKDKKCFVGDKFGFADIVANGAALYLGILEEVSGIVLATSEKFPNFCAWRDEYCTQNEEYFPSRDELLIRYRAYIQPVDASK.

One can recognise a GST N-terminal domain in the interval 2-81; the sequence is AEVKLLGLRY…YIDEAFEGPS (80 aa). Glutathione is bound by residues Ser-12, Lys-39, Ile-53, and 65–66; that span reads ES. The GST C-terminal domain maps to 86–210; that stretch reads DPYDRALARF…ELLIRYRAYI (125 aa).

It belongs to the GST superfamily. HSP26 family.

It carries out the reaction RX + glutathione = an S-substituted glutathione + a halide anion + H(+). This is Probable glutathione S-transferase (PRP1) from Solanum tuberosum (Potato).